The following is a 165-amino-acid chain: Large ribosomal subunit protein uL11 (165 aa).

It belongs to the universal ribosomal protein uL11 family. In terms of assembly, component of the large ribosomal subunit. Mature ribosomes consist of a small (40S) and a large (60S) subunit. The 40S subunit contains about 32 different proteins and 1 molecule of RNA (18S). The 60S subunit contains 45 different proteins and 3 molecules of RNA (25S, 5.8S and 5S).

It localises to the cytoplasm. Component of the ribosome, a large ribonucleoprotein complex responsible for the synthesis of proteins in the cell. The small ribosomal subunit (SSU) binds messenger RNAs (mRNAs) and translates the encoded message by selecting cognate aminoacyl-transfer RNA (tRNA) molecules. The large subunit (LSU) contains the ribosomal catalytic site termed the peptidyl transferase center (PTC), which catalyzes the formation of peptide bonds, thereby polymerizing the amino acids delivered by tRNAs into a polypeptide chain. The nascent polypeptides leave the ribosome through a tunnel in the LSU and interact with protein factors that function in enzymatic processing, targeting, and the membrane insertion of nascent chains at the exit of the ribosomal tunnel. This chain is Large ribosomal subunit protein uL11 (RPL12), found in Candida albicans (strain SC5314 / ATCC MYA-2876) (Yeast).